Reading from the N-terminus, the 238-residue chain is Large ribosomal subunit protein uL2 (238 aa).

Residues 200-238 (HGGGLHQSVSRPSTVSRNAPPGRKVGHIAARRTGRKEGK) are disordered. Over residues 206 to 216 (QSVSRPSTVSR) the composition is skewed to polar residues. A compositionally biased stretch (basic residues) spans 223–238 (KVGHIAARRTGRKEGK).

This sequence belongs to the universal ribosomal protein uL2 family. As to quaternary structure, part of the 50S ribosomal subunit. Forms a bridge to the 30S subunit in the 70S ribosome.

Functionally, one of the primary rRNA binding proteins. Required for association of the 30S and 50S subunits to form the 70S ribosome, for tRNA binding and peptide bond formation. It has been suggested to have peptidyltransferase activity; this is somewhat controversial. Makes several contacts with the 16S rRNA in the 70S ribosome. This chain is Large ribosomal subunit protein uL2, found in Saccharolobus islandicus (strain Y.N.15.51 / Yellowstone #2) (Sulfolobus islandicus).